Here is a 466-residue protein sequence, read N- to C-terminus: Magnetosome-associated protein MamJ (466 aa).

2 disordered regions span residues 1–23 and 60–80; these read MAKNRRDRGTDLPGDGDQKISTG and ANQGGLVETAQPPSAPIRSQD. The interval 1–24 is not required to restore magnetic response to deletion mutant; sequence MAKNRRDRGTDLPGDGDQKISTGP. Residues 25–80 form a required to restore magnetic response to deletion mutant region; it reads EIVSVTVHPSPNLAAAAKPVQGDIWASLLESSPWSANQGGLVETAQPPSAPIRSQD. 2 Tandem repeat unit repeats span residues 81 to 168 and 169 to 256; these read PVPV…VEPE and PAPV…VEPE. Not required to restore magnetic response to deletion mutant stretches follow at residues 81 to 256, 136 to 334, 333 to 374, and 432 to 466; these read PVPV…VEPE, ETDA…SQAE, AESV…AVEA, and VGSNVVAGTRRLAQTIEVSCGSCSSPKCDAEDKNK. Glu-Pro-rich motif repeat units lie at residues 145-164, 233-252, and 253-272; these read IEPEPALVEPVIEIEAEAAE and VEPEPAPVEPVIEIEAEAAE. Required to restore magnetic response to deletion mutant stretches follow at residues 375 to 432 and 426 to 466; these read TRQP…GRLV and VKGG…DKNK.

It belongs to the magnetosome MamJ protein family. As to quaternary structure, forms homooligomers. Interacts with MamK. Identified by N-terminal sequencing of a protein that is about 96 kDa in size. The protein runs anomalously on protein gels.

Its subcellular location is the magnetosome. In terms of biological role, required for assembly of magnetosome chains. Regulates the dynamic behavior of MamK filaments. May connect magnetosomes to MamK filaments. Moves from the cell poles towards midcell; movement does not depend on the treadmilling ability of MamK, suggesting MamJ associates and disassociates continuously from the MamK filament. The sequence is that of Magnetosome-associated protein MamJ from Magnetospirillum gryphiswaldense (strain DSM 6361 / JCM 21280 / NBRC 15271 / MSR-1).